Reading from the N-terminus, the 437-residue chain is MKFSSVLKQSAKYAAHVPKSGVFPRGFQVGSIASGVKKNGNLDLGVLVNTNKSYESSAASVFTTNKFKAAPVILSQRVLEEKNGKGINAIVVNSGCANSVTGEVGLQDATQMAKLIDEKLGATSPSTLIMSTGVIGQRLQMDKISKGVSQLFANNSFGSDFNSWLNIAKSICTTDTFPKLITSNFTLKNGTQYTLTGMAKGAGMICPNMATLLGFIVTDLPIESKALSKMLKFATDRSFNCISVDGDMSTNDTINMIANGAVKTDEITEDSPEFLQVRDQVTQFAQKLAQLVVRDGEGATKFVTVKVQNSSTFADAKIIAESISNSMLVKTALYGKDANWGRILCAIGYAKLDNLDSLQTDKLNVSFVATDNSEPRELKLLVNGVPQLNIDEERASQILALPDLEVLVDLGTGNEEAQFWTCDLSHEYVTINGDYRS.

6 residues coordinate substrate: threonine 173, lysine 200, threonine 211, glutamate 297, asparagine 432, and serine 437. The Nucleophile role is filled by threonine 211.

This sequence belongs to the ArgJ family. In terms of assembly, heterodimer of an alpha and a beta chain. In terms of processing, the alpha and beta chains are autoproteolytically processed from a single precursor protein within the mitochondrion.

The protein localises to the mitochondrion matrix. It carries out the reaction N(2)-acetyl-L-ornithine + L-glutamate = N-acetyl-L-glutamate + L-ornithine. The catalysed reaction is L-glutamate + acetyl-CoA = N-acetyl-L-glutamate + CoA + H(+). It functions in the pathway amino-acid biosynthesis; L-arginine biosynthesis; L-ornithine and N-acetyl-L-glutamate from L-glutamate and N(2)-acetyl-L-ornithine (cyclic): step 1/1. It participates in amino-acid biosynthesis; L-arginine biosynthesis; N(2)-acetyl-L-ornithine from L-glutamate: step 1/4. Its function is as follows. Catalyzes two activities which are involved in the cyclic version of arginine biosynthesis: the synthesis of acetylglutamate from glutamate and acetyl-CoA, and of ornithine by transacetylation between acetylornithine and glutamate. This is Arginine biosynthesis bifunctional protein ArgJ, mitochondrial from Zygosaccharomyces rouxii (strain ATCC 2623 / CBS 732 / NBRC 1130 / NCYC 568 / NRRL Y-229).